Reading from the N-terminus, the 222-residue chain is 3,4-dihydroxy-2-butanone 4-phosphate synthase (222 aa).

D-ribulose 5-phosphate-binding positions include 37–38 (RE), Asp-42, 150–154 (RPGHT), and Glu-174. Residue Glu-38 participates in Mg(2+) binding. His-153 contributes to the Mg(2+) binding site.

The protein belongs to the DHBP synthase family. Homodimer. It depends on Mg(2+) as a cofactor. The cofactor is Mn(2+).

It catalyses the reaction D-ribulose 5-phosphate = (2S)-2-hydroxy-3-oxobutyl phosphate + formate + H(+). It participates in cofactor biosynthesis; riboflavin biosynthesis; 2-hydroxy-3-oxobutyl phosphate from D-ribulose 5-phosphate: step 1/1. Its function is as follows. Catalyzes the conversion of D-ribulose 5-phosphate to formate and 3,4-dihydroxy-2-butanone 4-phosphate. This is 3,4-dihydroxy-2-butanone 4-phosphate synthase from Chlorobium limicola (strain DSM 245 / NBRC 103803 / 6330).